Here is a 342-residue protein sequence, read N- to C-terminus: 4-amino-5-hydroxymethyl-2-methylpyrimidine phosphate synthase (342 aa).

K62 is modified (N6-(pyridoxal phosphate)lysine). H66 is a catalytic residue. 115–118 (GEFG) is a pyridoxal 5'-phosphate binding site. The CCCFC; essential for catalytic activity, may be the site of iron coordination signature appears at 195–199 (CCCFC).

The protein belongs to the NMT1/THI5 family. As to quaternary structure, homodimer. Fe cation serves as cofactor.

The enzyme catalyses N(6)-(pyridoxal phosphate)-L-lysyl-[4-amino-5-hydroxymethyl-2-methylpyrimidine phosphate synthase] + L-histidyl-[4-amino-5-hydroxymethyl-2-methylpyrimidine phosphate synthase] + 2 Fe(3+) + 4 H2O = L-lysyl-[4-amino-5-hydroxymethyl-2-methylpyrimidine phosphate synthase] + (2S)-2-amino-5-hydroxy-4-oxopentanoyl-[4-amino-5-hydroxymethyl-2-methylpyrimidine phosphate synthase] + 4-amino-2-methyl-5-(phosphooxymethyl)pyrimidine + 3-oxopropanoate + 2 Fe(2+) + 2 H(+). The protein operates within cofactor biosynthesis; thiamine diphosphate biosynthesis. In terms of biological role, responsible for the formation of the pyrimidine heterocycle in the thiamine biosynthesis pathway. Catalyzes the formation of hydroxymethylpyrimidine phosphate (HMP-P) from histidine and pyridoxal phosphate (PLP). The protein uses PLP and the active site histidine to form HMP-P, generating an inactive enzyme. The enzyme can only undergo a single turnover, which suggests it is a suicide enzyme. The protein is 4-amino-5-hydroxymethyl-2-methylpyrimidine phosphate synthase of Aspergillus parasiticus.